Reading from the N-terminus, the 370-residue chain is Phosphate acyltransferase (370 aa).

This sequence belongs to the PlsX family. As to quaternary structure, homodimer. Probably interacts with PlsY.

The protein localises to the cytoplasm. It catalyses the reaction a fatty acyl-[ACP] + phosphate = an acyl phosphate + holo-[ACP]. Its pathway is lipid metabolism; phospholipid metabolism. Functionally, catalyzes the reversible formation of acyl-phosphate (acyl-PO(4)) from acyl-[acyl-carrier-protein] (acyl-ACP). This enzyme utilizes acyl-ACP as fatty acyl donor, but not acyl-CoA. The chain is Phosphate acyltransferase from Polaromonas naphthalenivorans (strain CJ2).